The sequence spans 447 residues: N-succinylarginine dihydrolase (447 aa).

Residues 19 to 28, Asn-110, and 137 to 138 each bind substrate; these read AGLSFGNEAS and HR. Glu-174 is an active-site residue. Arg-212 is a substrate binding site. Residue His-248 is part of the active site. The substrate site is built by Asp-250 and Asn-359. Residue Cys-365 is the Nucleophile of the active site.

Belongs to the succinylarginine dihydrolase family. Homodimer.

The catalysed reaction is N(2)-succinyl-L-arginine + 2 H2O + 2 H(+) = N(2)-succinyl-L-ornithine + 2 NH4(+) + CO2. Its pathway is amino-acid degradation; L-arginine degradation via AST pathway; L-glutamate and succinate from L-arginine: step 2/5. Catalyzes the hydrolysis of N(2)-succinylarginine into N(2)-succinylornithine, ammonia and CO(2). In Salmonella paratyphi B (strain ATCC BAA-1250 / SPB7), this protein is N-succinylarginine dihydrolase.